A 126-amino-acid polypeptide reads, in one-letter code: KH homology domain-containing protein 1B (126 aa).

Residues 19-78 form the KH domain; it reads PLVFDMEEDQEDYIFGPDDEYLHTLEVHSNTLIQLERWFSPTGQTRVTVVGPLKARLWVM.

Belongs to the KHDC1 family.

The protein is KH homology domain-containing protein 1B (Khdc1b) of Mus musculus (Mouse).